The primary structure comprises 442 residues: D-serine dehydratase (442 aa).

At Lys-118 the chain carries N6-(pyridoxal phosphate)lysine.

The protein belongs to the serine/threonine dehydratase family. DsdA subfamily. As to quaternary structure, monomer. The cofactor is pyridoxal 5'-phosphate.

It catalyses the reaction D-serine = pyruvate + NH4(+). The protein is D-serine dehydratase of Escherichia coli O157:H7.